Reading from the N-terminus, the 265-residue chain is Mlc titration factor A (265 aa).

Zn(2+) contacts are provided by histidine 111, histidine 148, histidine 152, and glutamate 211.

Belongs to the MtfA family. Interacts with Mlc. It depends on Zn(2+) as a cofactor.

The protein resides in the cytoplasm. In terms of biological role, involved in the modulation of the activity of the glucose-phosphotransferase system (glucose-PTS). Interacts with the transcriptional repressor Mlc, preventing its interaction with DNA and leading to the modulation of expression of genes regulated by Mlc, including ptsG, which encodes the PTS system glucose-specific EIICB component. Its function is as follows. Shows zinc-dependent metallopeptidase activity. The protein is Mlc titration factor A of Salmonella enteritidis PT4 (strain P125109).